A 706-amino-acid chain; its full sequence is Probable serine/threonine-protein kinase zyg-1 (706 aa).

A Protein kinase domain is found at 13–249 (YSHLKEIGKG…LTQIVLSEFM (237 aa)). ATP-binding positions include 19 to 27 (IGKGGFGVV) and lysine 41. Catalysis depends on aspartate 131, which acts as the Proton acceptor. 2 stretches are compositionally biased toward basic and acidic residues: residues 261-290 (SREH…DGRA) and 323-336 (FDSE…RDSG). Disordered stretches follow at residues 261–351 (SREH…NRSQ) and 566–632 (SPSS…VAPS). The segment covering 566 to 579 (SPSSLMPSGSSQTS) has biased composition (low complexity). Composition is skewed to polar residues over residues 580–592 (RFPF…NQPS) and 603–629 (KPTS…SPSV).

The protein belongs to the protein kinase superfamily. Ser/Thr protein kinase family. In terms of assembly, interacts with sel-10. In terms of processing, probably ubiquitinated by the SCF(sel-10) and SCF(lin-23) E3 ubiquitin ligase complexes, leading to its proteasomal degradation.

Its subcellular location is the cytoplasm. It is found in the cytoskeleton. The protein localises to the microtubule organizing center. It localises to the centrosome. The protein resides in the centriole. The catalysed reaction is L-seryl-[protein] + ATP = O-phospho-L-seryl-[protein] + ADP + H(+). The enzyme catalyses L-threonyl-[protein] + ATP = O-phospho-L-threonyl-[protein] + ADP + H(+). Its function is as follows. Protein kinase that plays a central role in centrosome duplication, control of centrosome size, spindle formation and nuclear envelope breakdown during cell divisions. Paternal copy is required to regulate synthesis of daughter centrioles prior to fertilization. Maternal copy regulates centrosome duplication during later cell cycles. Functions upstream of sas-5 and sas-6, and is required for their localization to the centrosome. Its role in nuclear envelope breakdown is mediated by the spindly-like protein spdl-1 and the RZZ complex, which in turn recruits the spindle checkpoint proteins mdf-1 and mdf-2, dynein and dynactin to unattached kinetochores. In Caenorhabditis elegans, this protein is Probable serine/threonine-protein kinase zyg-1.